Here is a 281-residue protein sequence, read N- to C-terminus: 3-deoxy-manno-octulosonate cytidylyltransferase (281 aa).

Belongs to the KdsB family.

The protein localises to the cytoplasm. The catalysed reaction is 3-deoxy-alpha-D-manno-oct-2-ulosonate + CTP = CMP-3-deoxy-beta-D-manno-octulosonate + diphosphate. It functions in the pathway nucleotide-sugar biosynthesis; CMP-3-deoxy-D-manno-octulosonate biosynthesis; CMP-3-deoxy-D-manno-octulosonate from 3-deoxy-D-manno-octulosonate and CTP: step 1/1. Its pathway is bacterial outer membrane biogenesis; lipopolysaccharide biosynthesis. Activates KDO (a required 8-carbon sugar) for incorporation into bacterial lipopolysaccharide in Gram-negative bacteria. This Xanthomonas campestris pv. campestris (strain B100) protein is 3-deoxy-manno-octulosonate cytidylyltransferase.